Here is a 434-residue protein sequence, read N- to C-terminus: Perilipin-3 (434 aa).

Residues 1–22 (MSADGAEADGSTQVTVEEPVQQ) form a disordered region. N-acetylserine is present on Ser2. Ser31 carries the phosphoserine modification. Lys65 bears the N6-acetyllysine mark. Ser91 is modified (phosphoserine). Lys122 participates in a covalent cross-link: Glycyl lysine isopeptide (Lys-Gly) (interchain with G-Cter in SUMO1). Phosphoserine occurs at positions 130 and 148. Thr170 carries the phosphothreonine modification. Residues Ser175 and Ser179 each carry the phosphoserine modification. Residue Thr216 is modified to Phosphothreonine. Ser217 and Ser241 each carry phosphoserine. Tyr251 carries the phosphotyrosine modification. Coiled-coil stretches lie at residues 252–277 (EHSLGKLRATKQRAQEALLQLSQVLS) and 353–377 (TNVKDQVQQARRQVEDLQATFSSIH).

Belongs to the perilipin family. As to quaternary structure, homooligomer. Interacts with M6PR (via the cytoplasmic domain). Interacts with IGF2R (via the cytoplasmic domain). In terms of assembly, may exist as a homodimer. Post-translationally, phosphorylation at Tyr-251 by isoform 1 of CHKA (CHKalpha2) promotes dissociation from lipid droplets: dissociation is followed by recruitment of autophagosome machinery to lipid droplets and subsequent lipid droplet lipolysis.

The protein resides in the lipid droplet. Its subcellular location is the endosome membrane. It localises to the cytoplasm. In terms of biological role, structural component of lipid droplets, which is required for the formation and maintenance of lipid storage droplets. Required for the transport of mannose 6-phosphate receptors (MPR) from endosomes to the trans-Golgi network. This Homo sapiens (Human) protein is Perilipin-3 (PLIN3).